A 252-amino-acid polypeptide reads, in one-letter code: Zinc finger protein 511 (252 aa).

C2H2-type zinc fingers lie at residues 80–105, 107–130, and 144–169; these read FACQ…HTLH, NVCS…LEWH, and YQCL…VRMH. Residues 177–221 form a disordered region; the sequence is FDKPKKSRSPASAEAPGDSGERSEGEAMEICSEPVAASPAPAGER. Arg-240 bears the Omega-N-methylarginine mark.

It belongs to the krueppel C2H2-type zinc-finger protein family.

The protein localises to the nucleus. Its function is as follows. May be involved in transcriptional regulation. The chain is Zinc finger protein 511 from Homo sapiens (Human).